Reading from the N-terminus, the 289-residue chain is Orotidine 5'-phosphate decarboxylase (289 aa).

Lys-97 acts as the Proton donor in catalysis.

The protein belongs to the OMP decarboxylase family. Type 2 subfamily.

The enzyme catalyses orotidine 5'-phosphate + H(+) = UMP + CO2. It functions in the pathway pyrimidine metabolism; UMP biosynthesis via de novo pathway; UMP from orotate: step 2/2. The chain is Orotidine 5'-phosphate decarboxylase from Petrotoga mobilis (strain DSM 10674 / SJ95).